The following is a 180-amino-acid chain: Peptide deformylase (180 aa).

C96 and H138 together coordinate Fe cation. Residue E139 is part of the active site. H142 provides a ligand contact to Fe cation.

It belongs to the polypeptide deformylase family. Fe(2+) serves as cofactor.

The catalysed reaction is N-terminal N-formyl-L-methionyl-[peptide] + H2O = N-terminal L-methionyl-[peptide] + formate. Removes the formyl group from the N-terminal Met of newly synthesized proteins. Requires at least a dipeptide for an efficient rate of reaction. N-terminal L-methionine is a prerequisite for activity but the enzyme has broad specificity at other positions. This is Peptide deformylase from Rhodopseudomonas palustris (strain BisA53).